We begin with the raw amino-acid sequence, 370 residues long: 3-dehydroquinate synthase (370 aa).

Residues 112 to 116 (GVVGD), 136 to 137 (TS), K149, K158, and 176 to 179 (TLRT) contribute to the NAD(+) site. Zn(2+)-binding residues include E191, H254, and H276.

This sequence belongs to the sugar phosphate cyclases superfamily. Dehydroquinate synthase family. It depends on NAD(+) as a cofactor. The cofactor is Co(2+). Zn(2+) serves as cofactor.

Its subcellular location is the cytoplasm. It carries out the reaction 7-phospho-2-dehydro-3-deoxy-D-arabino-heptonate = 3-dehydroquinate + phosphate. Its pathway is metabolic intermediate biosynthesis; chorismate biosynthesis; chorismate from D-erythrose 4-phosphate and phosphoenolpyruvate: step 2/7. Functionally, catalyzes the conversion of 3-deoxy-D-arabino-heptulosonate 7-phosphate (DAHP) to dehydroquinate (DHQ). The protein is 3-dehydroquinate synthase of Xanthomonas axonopodis pv. citri (strain 306).